Here is a 425-residue protein sequence, read N- to C-terminus: Enolase (425 aa).

Residue Gln-162 participates in (2R)-2-phosphoglycerate binding. Catalysis depends on Glu-204, which acts as the Proton donor. The Mg(2+) site is built by Asp-241, Glu-284, and Asp-311. (2R)-2-phosphoglycerate is bound by residues Lys-336, Arg-365, Ser-366, and Lys-387. Lys-336 serves as the catalytic Proton acceptor.

It belongs to the enolase family. The cofactor is Mg(2+).

Its subcellular location is the cytoplasm. The protein resides in the secreted. It localises to the cell surface. The catalysed reaction is (2R)-2-phosphoglycerate = phosphoenolpyruvate + H2O. It participates in carbohydrate degradation; glycolysis; pyruvate from D-glyceraldehyde 3-phosphate: step 4/5. Its function is as follows. Catalyzes the reversible conversion of 2-phosphoglycerate (2-PG) into phosphoenolpyruvate (PEP). It is essential for the degradation of carbohydrates via glycolysis. This is Enolase from Brucella abortus (strain S19).